A 292-amino-acid polypeptide reads, in one-letter code: tRNA (guanine-N(1)-)-methyltransferase (292 aa).

Residues glycine 151 and 175 to 180 (IGDYVL) each bind S-adenosyl-L-methionine.

The protein belongs to the RNA methyltransferase TrmD family. Homodimer.

It localises to the cytoplasm. It catalyses the reaction guanosine(37) in tRNA + S-adenosyl-L-methionine = N(1)-methylguanosine(37) in tRNA + S-adenosyl-L-homocysteine + H(+). Specifically methylates guanosine-37 in various tRNAs. The protein is tRNA (guanine-N(1)-)-methyltransferase of Corynebacterium diphtheriae (strain ATCC 700971 / NCTC 13129 / Biotype gravis).